The chain runs to 165 residues: Large ribosomal subunit protein uL10 (165 aa).

This sequence belongs to the universal ribosomal protein uL10 family. As to quaternary structure, part of the ribosomal stalk of the 50S ribosomal subunit. The N-terminus interacts with L11 and the large rRNA to form the base of the stalk. The C-terminus forms an elongated spine to which L12 dimers bind in a sequential fashion forming a multimeric L10(L12)X complex.

Forms part of the ribosomal stalk, playing a central role in the interaction of the ribosome with GTP-bound translation factors. This Enterobacter sp. (strain 638) protein is Large ribosomal subunit protein uL10.